Consider the following 319-residue polypeptide: MASLGAGAEPESVLFGKDGTEACESPEGRRSGRRKRTKIVPVWENKPCGSSRSLVRRIGSHLPLKPCTRACFEALPPASNLYLTDTPMVPTLADVKWLAADEDETYARVRSDTRPLKHKWRPSPLLVMQRNSSVPNLKMKEEKMFCLKKPGLSLNRSSDIQEELSILRSQIARIVAGDSASSCLGSDSIPVNVDLEASLPDYGPSYQSTTSFVISDITEEDELDVSEYSSASLVDSTISLQRQVESNMSDDDEDSLCLSKSNSFADMMGILKDIHKMKLNRDWSNRNQCLHKEEDPVNLISEVLRQKFALCDPDSVKNE.

Residues 1–35 (MASLGAGAEPESVLFGKDGTEACESPEGRRSGRRK) form a disordered region.

Belongs to the MTFR1 family.

The protein resides in the mitochondrion outer membrane. In terms of biological role, mitochondrial protein required for adaptation of miochondrial dynamics to metabolic changes. Regulates mitochondrial morphology at steady state and mediates AMPK-dependent stress-induced mitochondrial fragmentation via the control of OPA1 levels. The polypeptide is Mitochondrial fission regulator 1-like (mtfr1l) (Xenopus tropicalis (Western clawed frog)).